The primary structure comprises 379 residues: Diaminopimelate decarboxylase (379 aa).

An N6-(pyridoxal phosphate)lysine modification is found at K48. Residues G214 and 242 to 245 (EPGR) contribute to the pyridoxal 5'-phosphate site. Substrate-binding residues include R245, R280, and Y284. The active-site Proton donor is the C309. Substrate contacts are provided by E310 and Y338. Residue Y338 participates in pyridoxal 5'-phosphate binding.

Belongs to the Orn/Lys/Arg decarboxylase class-II family. LysA subfamily. As to quaternary structure, homodimer. It depends on pyridoxal 5'-phosphate as a cofactor.

The catalysed reaction is meso-2,6-diaminopimelate + H(+) = L-lysine + CO2. Its pathway is amino-acid biosynthesis; L-lysine biosynthesis via DAP pathway; L-lysine from DL-2,6-diaminopimelate: step 1/1. In terms of biological role, specifically catalyzes the decarboxylation of meso-diaminopimelate (meso-DAP) to L-lysine. This Deinococcus radiodurans (strain ATCC 13939 / DSM 20539 / JCM 16871 / CCUG 27074 / LMG 4051 / NBRC 15346 / NCIMB 9279 / VKM B-1422 / R1) protein is Diaminopimelate decarboxylase.